We begin with the raw amino-acid sequence, 327 residues long: Fe-S cluster assembly protein DRE2 (327 aa).

Residues 1–14 show a composition bias toward polar residues; the sequence is MSPATVTIDTTPDF. Disordered stretches follow at residues 1–20 and 153–179; these read MSPATVTIDTTPDFSNGGAP and NKGEGGGPVQSPAAATQPTAPAPAAAA. An N-terminal SAM-like domain region spans residues 17 to 144; it reads GGAPHSTLLL…EKPAEEVAAV (128 aa). Positions 145 to 214 are linker; that stretch reads PLKFLKKKNK…EDELMTEEDL (70 aa). Low complexity predominate over residues 164-179; it reads PAAATQPTAPAPAAAA. Positions 224, 235, 238, and 240 each coordinate [2Fe-2S] cluster. The segment at 224 to 240 is fe-S binding site A; that stretch reads CAPKPGKKRRACKDCTC. 4 residues coordinate [4Fe-4S] cluster: cysteine 290, cysteine 293, cysteine 301, and cysteine 304. 2 short sequence motifs (cx2C motif) span residues 290–293 and 301–304; these read CGSC and CADC. Residues 290 to 304 form a fe-S binding site B region; it reads CGSCALGDAFRCADC.

Belongs to the anamorsin family. As to quaternary structure, monomer. Interacts with TAH18. Interacts with MIA40. The cofactor is [2Fe-2S] cluster. [4Fe-4S] cluster is required as a cofactor.

It localises to the cytoplasm. The protein localises to the mitochondrion intermembrane space. In terms of biological role, component of the cytosolic iron-sulfur (Fe-S) protein assembly (CIA) machinery required for the maturation of extramitochondrial Fe-S proteins. Part of an electron transfer chain functioning in an early step of cytosolic Fe-S biogenesis, facilitating the de novo assembly of a [4Fe-4S] cluster on the scaffold complex CFD1-NBP35. Electrons are transferred to DRE2 from NADPH via the FAD- and FMN-containing protein TAH18. TAH18-DRE2 are also required for the assembly of the diferric tyrosyl radical cofactor of ribonucleotide reductase (RNR), probably by providing electrons for reduction during radical cofactor maturation in the catalytic small subunit RNR2. This Pyricularia oryzae (strain 70-15 / ATCC MYA-4617 / FGSC 8958) (Rice blast fungus) protein is Fe-S cluster assembly protein DRE2.